The following is a 507-amino-acid chain: MKNFSKFALTSIAALTVASPLVNTEVDAKDKVSATQNIDAKVTQESQATNALKELPKSENIKKHYKDYKVTDTEKDNKGFTHYTLQPKVGNTYAPDKEVKVHTNKEGKVVLVNGDTDAKKVQPTNKVAISKESATDKAFEAIKIDRQKAKNLKSDVIKTNKVEIDGEKNKYVYNIEIITTSPKISHWNVKIDAETGQVVDKLNMIKEAATTGTGKGVLGDTKQININSVSGGYALQDLTQQGTLSAYNYDANTGQAYLMQDKDKNFVDDEQRAGVDANYYAKETYDYYKNTFGRESYDNQGSPIISIAHVNNFQGQDNRNNAAWIGDKMIYGDGDGRTFTALSGANDVVAHEITHGVTQQTANLVYRSQSGALNESFSDVFGYFIDDEDFLMGEDVYTPGVGGDALRSMSNPERFGQPSHMNDFVYTNSDNGGVHTNSGIPNKAAYNTIRSIGKQRSEQIYYRALTVYLTSNSDFQDAKASLQQAAFDLYGDGIAQQVGQAWDSVGV.

Residues 1 to 28 form the signal peptide; sequence MKNFSKFALTSIAALTVASPLVNTEVDA. The propeptide occupies 29–207; sequence KDKVSATQNI…VVDKLNMIKE (179 aa). Position 347 (D347) interacts with Ca(2+). H351 serves as a coordination point for Zn(2+). E352 is an active-site residue. 2 residues coordinate Zn(2+): H355 and E375. D386, E388, D389, L391, E394, Y397, T398, V401, and D404 together coordinate Ca(2+). H435 serves as the catalytic Proton donor.

The protein belongs to the peptidase M4 family. Ca(2+) serves as cofactor. The cofactor is Zn(2+).

Its subcellular location is the secreted. Its function is as follows. Protease that has a low substrate specificity. Glucagon is preferentially cleaved between aromatic (Phe) and hydrophobic (Val) amino acids. Hydrolyzes casein and elastin. The chain is Extracellular elastase (sepA) from Staphylococcus epidermidis (strain ATCC 12228 / FDA PCI 1200).